The following is a 396-amino-acid chain: Tryptophan synthase beta chain (396 aa).

The residue at position 86 (K86) is an N6-(pyridoxal phosphate)lysine.

Belongs to the TrpB family. In terms of assembly, tetramer of two alpha and two beta chains. It depends on pyridoxal 5'-phosphate as a cofactor.

It carries out the reaction (1S,2R)-1-C-(indol-3-yl)glycerol 3-phosphate + L-serine = D-glyceraldehyde 3-phosphate + L-tryptophan + H2O. It functions in the pathway amino-acid biosynthesis; L-tryptophan biosynthesis; L-tryptophan from chorismate: step 5/5. Functionally, the beta subunit is responsible for the synthesis of L-tryptophan from indole and L-serine. This is Tryptophan synthase beta chain from Aliivibrio salmonicida (strain LFI1238) (Vibrio salmonicida (strain LFI1238)).